The chain runs to 468 residues: Uronate isomerase (468 aa).

The protein belongs to the metallo-dependent hydrolases superfamily. Uronate isomerase family.

The enzyme catalyses D-glucuronate = D-fructuronate. It catalyses the reaction aldehydo-D-galacturonate = keto-D-tagaturonate. Its pathway is carbohydrate metabolism; pentose and glucuronate interconversion. The protein is Uronate isomerase of Lachnospira eligens (strain ATCC 27750 / DSM 3376 / VPI C15-48 / C15-B4) (Eubacterium eligens).